A 120-amino-acid chain; its full sequence is NAD(P)H-quinone oxidoreductase subunit 3, chloroplastic (120 aa).

3 consecutive transmembrane segments (helical) span residues 7–27, 64–84, and 89–109; these read YNYF…AFSI, MFAL…PWAM, and LGIP…IGLI.

It belongs to the complex I subunit 3 family. As to quaternary structure, NDH is composed of at least 16 different subunits, 5 of which are encoded in the nucleus.

It localises to the plastid. The protein localises to the chloroplast thylakoid membrane. It carries out the reaction a plastoquinone + NADH + (n+1) H(+)(in) = a plastoquinol + NAD(+) + n H(+)(out). It catalyses the reaction a plastoquinone + NADPH + (n+1) H(+)(in) = a plastoquinol + NADP(+) + n H(+)(out). In terms of biological role, NDH shuttles electrons from NAD(P)H:plastoquinone, via FMN and iron-sulfur (Fe-S) centers, to quinones in the photosynthetic chain and possibly in a chloroplast respiratory chain. The immediate electron acceptor for the enzyme in this species is believed to be plastoquinone. Couples the redox reaction to proton translocation, and thus conserves the redox energy in a proton gradient. The polypeptide is NAD(P)H-quinone oxidoreductase subunit 3, chloroplastic (Anthoceros angustus (Hornwort)).